The sequence spans 307 residues: Mitochondrial brown fat uncoupling protein 1 (307 aa).

The Mitochondrial intermembrane portion of the chain corresponds to 1 to 10 (MVSQTTSEVQ). Residues 11–32 (PTMGVKIFSAGVAACLADIITF) form a helical membrane-spanning segment. Solcar repeat units follow at residues 11–102 (PTMG…VQEY), 111–201 (PTLV…MKGA), and 210–295 (DDVP…LKKE). The Mitochondrial matrix portion of the chain corresponds to 33–73 (PLDTAKVRLQIQGEGQTSSTIRYKGVLGTITTLAKTEGLPK). Position 56 (Lys-56) interacts with fatty acid 16:0. The chain crosses the membrane as a helical span at residues 74–96 (LYSGLPAGIQRQISFASLRIGLY). Topologically, residues 97–116 (DTVQEYFSSGKETPPTLVNR) are mitochondrial intermembrane. Residues 117 to 133 (ISAGLMTGGVAVFIGQP) form a helical membrane-spanning segment. Over 134 to 178 (TEVVKVRLQAQSHLHGIKPRYTGTYNAYRIIATTESLSTLWKGTT) the chain is Mitochondrial matrix. A helical transmembrane segment spans residues 179–195 (PNLLRNVIINCTELVTY). At 196-212 (DLMKGALVNNQILADDV) the chain is on the mitochondrial intermembrane side. Residues 213–232 (PCHLLSALVAGFCTTFLASP) form a helical membrane-spanning segment. The Mitochondrial matrix segment spans residues 233–266 (ADVVKTRFINSLPGQYPSVPSCAMTMFTKEGPTA). The residue at position 254 (Cys-254) is a Cysteine sulfenic acid (-SOH). Residues 267–289 (FFKGFVPSFLRLASWNVIMFVCF) form a helical membrane-spanning segment. Fatty acid 16:0 is bound at residue Lys-269. The Mitochondrial intermembrane portion of the chain corresponds to 290–307 (EQLKKELMKSRQTVDCTT).

Belongs to the mitochondrial carrier (TC 2.A.29) family. Most probably functions as a monomer. Binds one purine nucleotide per monomer. However, has also been suggested to function as a homodimer or a homotetramer. Tightly associates with cardiolipin in the mitochondrion inner membrane; may stabilize and regulate its activity. Post-translationally, may undergo sulfenylation upon cold exposure. May increase the sensitivity of UCP1 thermogenic function to the activation by noradrenaline probably through structural effects. In terms of processing, may undergo ubiquitin-mediated proteasomal degradation. Brown adipose tissue.

The protein localises to the mitochondrion inner membrane. The catalysed reaction is H(+)(in) = H(+)(out). Has no constitutive proton transporter activity and has to be activated by long-chain fatty acids/LCFAs. Inhibited by purine nucleotides. Both purine nucleotides and LCFAs bind the cytosolic side of the transporter and directly compete to activate or inhibit it. Activated by noradrenaline and reactive oxygen species. Despite lacking canonical translational encoding for selenocysteine, a small pool of the protein has been observed to selectively incorporate selenocysteine at 'Cys-254'. Selenocysteine-modified protein is highly sensitive to redox modification and may constitute a pool of protein highly sensitive to activation by elevated levels of reactive oxygen species (ROS). Its function is as follows. Mitochondrial protein responsible for thermogenic respiration, a specialized capacity of brown adipose tissue and beige fat that participates in non-shivering adaptive thermogenesis to temperature and diet variations and more generally to the regulation of energy balance. Functions as a long-chain fatty acid/LCFA and proton symporter, simultaneously transporting one LCFA and one proton through the inner mitochondrial membrane. However, LCFAs remaining associated with the transporter via their hydrophobic tails, it results in an apparent transport of protons activated by LCFAs. Thereby, dissipates the mitochondrial proton gradient and converts the energy of substrate oxydation into heat instead of ATP. Regulates the production of reactive oxygen species/ROS by mitochondria. This Phodopus sungorus (Striped hairy-footed hamster) protein is Mitochondrial brown fat uncoupling protein 1.